Reading from the N-terminus, the 354-residue chain is Guanine nucleotide-binding protein G(i) subunit alpha-1 (354 aa).

Gly2 carries N-myristoyl glycine lipidation. A lipid anchor (S-palmitoyl cysteine) is attached at Cys3. Residues 32–354 (REVKLLLLGA…KNNLKDCGLF (323 aa)) form the G-alpha domain. Residues 35–48 (KLLLLGAGESGKST) form a G1 motif region. GTP-binding positions include 43 to 48 (ESGKST), 150 to 151 (DS), and 175 to 178 (LRTR). Ser47 is a Mg(2+) binding site. The tract at residues 173–181 (DVLRTRVKT) is G2 motif. Thr181 contributes to the Mg(2+) binding site. Positions 196-205 (FKMFDVGGQR) are G3 motif. Residues 200 to 204 (DVGGQ), 269 to 272 (NKKD), and Ala326 each bind GTP. Residues 265–272 (ILFLNKKD) form a G4 motif region. Positions 324 to 329 (TCATDT) are G5 motif.

The protein belongs to the G-alpha family. G(i/o/t/z) subfamily. In terms of assembly, heterotrimeric G proteins are composed of 3 units; alpha, beta and gamma. The alpha chain contains the guanine nucleotide binding site. Part of a spindle orientation complex. Identified in complex with the beta subunit GNB1 and the gamma subunit GNG1. Identified in complex with the beta subunit GNB1 and the gamma subunit GNG2. GTP binding causes dissociation of the heterotrimer, liberating the individual subunits so that they can interact with downstream effector proteins. Post-translationally, myristoylation at Gly-2 is required for membrane anchoring before palmitoylation. In terms of processing, palmitoylation at Cys-3 varies with membrane lipid composition.

It is found in the nucleus. Its subcellular location is the cytoplasm. It localises to the cell membrane. The protein resides in the cytoskeleton. The protein localises to the microtubule organizing center. It is found in the centrosome. Its subcellular location is the cell cortex. It localises to the membrane. The catalysed reaction is GTP + H2O = GDP + phosphate + H(+). In terms of biological role, guanine nucleotide-binding proteins (G proteins) function as transducers downstream of G protein-coupled receptors (GPCRs) in numerous signaling cascades. The alpha chain contains the guanine nucleotide binding site and alternates between an active, GTP-bound state and an inactive, GDP-bound state. Signaling by an activated GPCR promotes GDP release and GTP binding. The alpha subunit has a low GTPase activity that converts bound GTP to GDP, thereby terminating the signal. Both GDP release and GTP hydrolysis are modulated by numerous regulatory proteins. Signaling is mediated via effector proteins, such as adenylate cyclase. Inhibits adenylate cyclase activity, leading to decreased intracellular cAMP levels. Required for cortical dynein-dynactin complex recruitment during metaphase. The chain is Guanine nucleotide-binding protein G(i) subunit alpha-1 (gnai1) from Oryzias latipes (Japanese rice fish).